Here is a 98-residue protein sequence, read N- to C-terminus: Large ribosomal subunit protein eL30 (98 aa).

Belongs to the eukaryotic ribosomal protein eL30 family.

In Methanothermobacter thermautotrophicus (strain ATCC 29096 / DSM 1053 / JCM 10044 / NBRC 100330 / Delta H) (Methanobacterium thermoautotrophicum), this protein is Large ribosomal subunit protein eL30 (rpl30e).